The chain runs to 491 residues: MTDLTSLTLAEARKGLADKTFTSLELTDAHLKAIEAARALNAFVMETPDQARAMARDADARIGKGEGGPLAGIPLGIKDLFATKDVRTTACSKILGNFVPTYESTVTAQLWRDGAVMLGKLNNDEFAMGSSNETSCFGPVGNPWRREGSNTTLVPGGSSGGSASAVAALLCMGATATDTGGSIRQPAAFTATVGIKPTYGRCSRWGIVAFASSLDQAGPIARTTRDAAILLRSMAGHDPKDTTSVDIPVPDYEAAIGKSVKGMKIGIPKEYRLDGMPAEIEKLWSEGAAWLKAAGAELVEVSLPHTKYALPAYYIVAPAEASSNLARYDGVRYGLRVPGKSIGELYENTRAEGFGAEVRRRVMIGTYVLSAGYYDAYYIRAQKVRTLIKRDFEDCFAKGVSAILTPATPSAAFGVGEKGGADPVEMYLNDIFTVTVNMAGLPGIAVPAGKDSQGLPLGLQLIGRPFDEETLFSLGEVIEQAAGRFTPVRWW.

Residues K78 and S158 each act as charge relay system in the active site. S182 functions as the Acyl-ester intermediate in the catalytic mechanism.

This sequence belongs to the amidase family. GatA subfamily. In terms of assembly, heterotrimer of A, B and C subunits.

It catalyses the reaction L-glutamyl-tRNA(Gln) + L-glutamine + ATP + H2O = L-glutaminyl-tRNA(Gln) + L-glutamate + ADP + phosphate + H(+). Functionally, allows the formation of correctly charged Gln-tRNA(Gln) through the transamidation of misacylated Glu-tRNA(Gln) in organisms which lack glutaminyl-tRNA synthetase. The reaction takes place in the presence of glutamine and ATP through an activated gamma-phospho-Glu-tRNA(Gln). This chain is Glutamyl-tRNA(Gln) amidotransferase subunit A, found in Bradyrhizobium sp. (strain ORS 278).